The chain runs to 541 residues: Circadian clock oscillator protein KaiC (541 aa).

The interval 1–40 (MNQSLGPSEPEKPQDNTAEDSTEPTPDNHRADLSELRGIP) is disordered. 2 consecutive KaiC domains span residues 21–268 (STEP…INIF) and 282–541 (VRVS…EEGL). Residues 26–35 (PDNHRADLSE) show a composition bias toward basic and acidic residues. ATP is bound by residues Gly-70, Thr-71, Gly-72, Lys-73, Thr-74, Leu-75, Ser-110, Lys-245, Leu-246, Arg-247, Thr-249, His-251, Thr-261, Thr-311, Gly-312, Thr-313, Gly-314, Lys-315, and Thr-316. A Mg(2+)-binding site is contributed by Thr-74. Residues Thr-316 and Glu-339 each contribute to the Mg(2+) site. Trp-352 contacts ATP. The residue at position 452 (Ser-452) is a Phosphoserine; by autocatalysis. At Thr-453 the chain carries Phosphothreonine; by autocatalysis. 7 residues coordinate ATP: Arg-472, Lys-478, Met-479, Arg-480, Ser-482, His-484, and Lys-486.

Belongs to the KaiC family. As to quaternary structure, homohexamer; hexamerization is dependent on ATP-binding. The KaiABC complex composition changes during the circadian cycle to control KaiC phosphorylation. Complexes KaiC(6), KaiA(2-4):KaiC(6), KaiB(6):KaiC(6) and KaiC(6):KaiB(6):KaiA(12) are among the most important forms, many form cooperatively. KaiC interacts with SasA, activating its autokinase function and leading to RpaA activation. The cofactor is Mg(2+). Post-translationally, phosphorylated on serine and threonine residues by autocatalysis. Has a 4 step phosphorylation cycle; the autokinase acts first on Thr-453, then Ser-452. When Ser-452 is modified KaiC switches to an autophosphatase mode, acting first on phospho-Thr-453 then phospho-Ser-452.

It carries out the reaction L-seryl-[protein] + ATP = O-phospho-L-seryl-[protein] + ADP + H(+). The catalysed reaction is L-threonyl-[protein] + ATP = O-phospho-L-threonyl-[protein] + ADP + H(+). The enzyme catalyses ATP + H2O = ADP + phosphate + H(+). Its activity is regulated as follows. The interaction with KaiA enhances its phosphorylation status, while the interaction with KaiB decreases it. In terms of biological role, central component of the KaiABC oscillator complex, which constitutes the main circadian regulator in cyanobacteria. Complex composition changes during the circadian cycle to control KaiC phosphorylation. KaiA stimulates KaiC autophosphorylation, while KaiB sequesters KaiA, leading to KaiC autodephosphorylation. Clock output pathways impact the RpaA transcriptional regulator. KaiC enhances the autophosphorylation activity of SasA, which then transfers its phosphate group to RpaA to activate it. KaiB and KaiC together enhance the phospho-RpaA dephosphatase activity of CikA. Has a weak, temperature-independent ATPase activity; ATPase activity defines the circadian period. The phosphorylation state of KaiC modulates its ATPase activity and effects KaiB binding. The polypeptide is Circadian clock oscillator protein KaiC (Parathermosynechococcus lividus (Thermostichus lividus)).